The chain runs to 265 residues: Undecaprenyl-diphosphatase (265 aa).

8 helical membrane-spanning segments follow: residues phenylalanine 19 to glycine 39, alanine 42 to tryptophan 62, isoleucine 80 to alanine 100, leucine 108 to valine 128, methionine 143 to phenylalanine 163, serine 181 to tyrosine 201, isoleucine 220 to valine 240, and isoleucine 243 to tryptophan 263.

Belongs to the UppP family.

Its subcellular location is the cell inner membrane. It carries out the reaction di-trans,octa-cis-undecaprenyl diphosphate + H2O = di-trans,octa-cis-undecaprenyl phosphate + phosphate + H(+). Its function is as follows. Catalyzes the dephosphorylation of undecaprenyl diphosphate (UPP). Confers resistance to bacitracin. The protein is Undecaprenyl-diphosphatase of Solidesulfovibrio magneticus (strain ATCC 700980 / DSM 13731 / RS-1) (Desulfovibrio magneticus).